We begin with the raw amino-acid sequence, 329 residues long: uncharacterized protein (329 aa).

The N-terminal stretch at 1–32 (MSQDRGPRRPRRLEKCALISASATVLSLTASG) is a signal peptide. Cysteine 33 carries N-palmitoyl cysteine lipidation. A lipid anchor (S-diacylglycerol cysteine) is attached at cysteine 33.

Its subcellular location is the cell membrane. This is an uncharacterized protein from Streptomyces coelicolor (strain ATCC BAA-471 / A3(2) / M145).